The sequence spans 143 residues: Nucleoside diphosphate kinase (143 aa).

Residues Lys11, Phe59, Arg87, Thr93, Arg104, and Asn114 each coordinate ATP. His117 functions as the Pros-phosphohistidine intermediate in the catalytic mechanism.

It belongs to the NDK family. Homotetramer. Mg(2+) is required as a cofactor.

It is found in the cytoplasm. It catalyses the reaction a 2'-deoxyribonucleoside 5'-diphosphate + ATP = a 2'-deoxyribonucleoside 5'-triphosphate + ADP. The catalysed reaction is a ribonucleoside 5'-diphosphate + ATP = a ribonucleoside 5'-triphosphate + ADP. Major role in the synthesis of nucleoside triphosphates other than ATP. The ATP gamma phosphate is transferred to the NDP beta phosphate via a ping-pong mechanism, using a phosphorylated active-site intermediate. The protein is Nucleoside diphosphate kinase of Edwardsiella ictaluri (strain 93-146).